Here is a 328-residue protein sequence, read N- to C-terminus: uncharacterized protein (328 aa).

The tract at residues 1–22 (MPVKPNQPRPSTKQDPSSGASR) is disordered. The span at 9–21 (RPSTKQDPSSGAS) shows a compositional bias: polar residues. The next 6 membrane-spanning stretches (helical) occupy residues 66–86 (FSFL…GFVL), 126–146 (TVGL…IGNL), 176–196 (FLSL…TSVA), 221–241 (LIAL…ILWV), 255–275 (GTLM…VALP), and 290–310 (IGLM…AAWI).

The protein to E.coli YhjD.

It localises to the cell inner membrane. This is an uncharacterized protein from Dickeya dadantii (strain 3937) (Erwinia chrysanthemi (strain 3937)).